A 313-amino-acid polypeptide reads, in one-letter code: E3 ubiquitin-protein ligase SGIP1 (313 aa).

The 50-residue stretch at 16-65 (REYSKEIPIDLLIEIFSRLSTGDIARCRCVSKIWSSVPRLRDFTELFLKI) folds into the F-box domain.

In terms of assembly, interacts with SGS3 in cytoplasmic granules.

It is found in the cytoplasmic granule. It catalyses the reaction S-ubiquitinyl-[E2 ubiquitin-conjugating enzyme]-L-cysteine + [acceptor protein]-L-lysine = [E2 ubiquitin-conjugating enzyme]-L-cysteine + N(6)-ubiquitinyl-[acceptor protein]-L-lysine.. It participates in protein degradation; proteasomal ubiquitin-dependent pathway. The protein operates within protein modification; protein ubiquitination. In terms of biological role, E3 ubiquitin-protein ligase which triggers the ubiquitination and subsequent degradation of SGS3 in response to heat. Involved in the mechanisms necessary for quick response to heat and subsequent heritable transgenerational memory of heat acclimation (global warming) such as early flowering and attenuated immunity; this process includes epigenetic regulation as well as post-transcriptional gene silencing (PTGS). In response to heat, HSFA2 is activated and promotes the expression of REF6 which in turn derepresses HSFA2, thus establishing an inheritable feedback loop able to trigger SGIP1 and subsequent SGIP1-mediated SGS3 degradation; this prevents the biosynthesis of trans-acting siRNA (tasiRNA) and leads to the release of HTT5, which drives early flowering but attenuates immunity. In Arabidopsis thaliana (Mouse-ear cress), this protein is E3 ubiquitin-protein ligase SGIP1.